A 512-amino-acid chain; its full sequence is 2,3-bisphosphoglycerate-independent phosphoglycerate mutase (512 aa).

Mn(2+)-binding residues include D13 and S63. S63 serves as the catalytic Phosphoserine intermediate. Residues H124, R154–D155, R186, R192, R262–R265, and K337 each bind substrate. 5 residues coordinate Mn(2+): D404, H408, D445, H446, and H463.

It belongs to the BPG-independent phosphoglycerate mutase family. Monomer. Mn(2+) serves as cofactor.

It carries out the reaction (2R)-2-phosphoglycerate = (2R)-3-phosphoglycerate. Its pathway is carbohydrate degradation; glycolysis; pyruvate from D-glyceraldehyde 3-phosphate: step 3/5. Functionally, essential for rapid growth and for sporulation. Catalyzes the interconversion of 2-phosphoglycerate and 3-phosphoglycerate. The sequence is that of 2,3-bisphosphoglycerate-independent phosphoglycerate mutase from Oceanobacillus iheyensis (strain DSM 14371 / CIP 107618 / JCM 11309 / KCTC 3954 / HTE831).